We begin with the raw amino-acid sequence, 176 residues long: ATP-dependent protease subunit HslV (176 aa).

Residue T5 is part of the active site. Positions 161, 164, and 167 each coordinate Na(+).

Belongs to the peptidase T1B family. HslV subfamily. In terms of assembly, a double ring-shaped homohexamer of HslV is capped on each side by a ring-shaped HslU homohexamer. The assembly of the HslU/HslV complex is dependent on binding of ATP.

The protein resides in the cytoplasm. The catalysed reaction is ATP-dependent cleavage of peptide bonds with broad specificity.. Allosterically activated by HslU binding. In terms of biological role, protease subunit of a proteasome-like degradation complex believed to be a general protein degrading machinery. This chain is ATP-dependent protease subunit HslV, found in Thermoanaerobacter pseudethanolicus (strain ATCC 33223 / 39E) (Clostridium thermohydrosulfuricum).